We begin with the raw amino-acid sequence, 1016 residues long: DENN domain-containing protein 1A (1016 aa).

The uDENN domain occupies 13–145; it reads FEVYVEVAYP…HRLPIPDPGV (133 aa). Residues 162–298 form the cDENN domain; sequence ELPSIPENRN…VISSLKNRLK (137 aa). The region spanning 300 to 378 is the dDENN domain; the sequence is VSTTTGDGVA…DGRLDLLNSG (79 aa). Residues 381 to 385 carry the FXDXF motif motif; it reads FSDVF. Residues 453–565 form a disordered region; it reads DITENGCVSS…GPTPAPPDRA (113 aa). A Phosphoserine modification is found at Ser473. A compositionally biased stretch (basic and acidic residues) spans 479-489; that stretch reads QDPRLREDRRP. The segment covering 500-509 has biased composition (basic residues); it reads PRPHVVRRPK. At Thr519 the chain carries Phosphothreonine. Residues Ser520, Ser522, Ser523, Ser536, Ser538, and Ser546 each carry the phosphoserine modification. Positions 569 to 578 match the Clathrin box motif; the sequence is DLLEDVFSSL. Phosphoserine is present on Ser592. A disordered region spans residues 681–737; that stretch reads LSPSIKEETPIPTPGSITIPRPQGRKTPELGIVPPPPTARPAKLQAAGGPLGDFSSE. Ser750 is modified (phosphoserine). Arg760 is subject to Omega-N-methylarginine. Disordered regions lie at residues 763–783 and 935–1016; these read PQGPTELLQPPSPAPGAAGTG and SARA…ETFE. Pro residues predominate over residues 954–970; sequence LLPPRPPQSLQPTPQPS. Composition is skewed to basic and acidic residues over residues 977 to 988 and 1007 to 1016; these read DPFEDLLRKTKQ and QLRRQWETFE.

Interacts with RAB35. Interacts with clathrin and with the adapter protein complex 2, AP-2. Interacts with ITSN1 and SH3GL2. Interacts (when phosphorylated) with YWHAE. In terms of processing, phosphorylated on serine and/or threonine in an Akt-dependent manner. Phosphorylation probably regulates the guanine nucleotide exchange factor (GEF) activity, possibly by disrupting an intramolecular interaction between the DENN domain and the C-terminus of the protein, thereby relieving the autoinhibition.

It is found in the cytoplasmic vesicle. The protein resides in the clathrin-coated vesicle membrane. It localises to the presynaptic cell membrane. Its activity is regulated as follows. The guanine nucleotide exchange factor (GEF) activity is autoinhibited. Autoinhibition may be the result of intramolecular interaction between the DENN domain and the C-terminus, which is disrupted upon phosphorylation. Activation is regulated by Akt activation. Guanine nucleotide exchange factor (GEF) regulating clathrin-mediated endocytosis through RAB35 activation. Promotes the exchange of GDP to GTP, converting inactive GDP-bound RAB35 into its active GTP-bound form. Regulates clathrin-mediated endocytosis of synaptic vesicles and mediates exit from early endosomes. Binds phosphatidylinositol-phosphates (PtdInsPs), with some preference for PtdIns(3)P. The sequence is that of DENN domain-containing protein 1A (Dennd1a) from Mus musculus (Mouse).